A 185-amino-acid chain; its full sequence is Biofilm operon icaADBC HTH-type negative transcriptional regulator IcaR (185 aa).

The region spanning 1–59 (MKDKIIDNAITLFSEKGYDGTTLDDISKSVNIKKASLYYHYDNKEEIYRKSVENCFNYF) is the HTH tetR-type domain. Positions 22–41 (TLDDISKSVNIKKASLYYHY) form a DNA-binding region, H-T-H motif.

In terms of assembly, homodimer.

Functionally, represses transcription of the icaADBC operon necessary for biofilm production. The chain is Biofilm operon icaADBC HTH-type negative transcriptional regulator IcaR (icaR) from Staphylococcus epidermidis (strain ATCC 35984 / DSM 28319 / BCRC 17069 / CCUG 31568 / BM 3577 / RP62A).